A 271-amino-acid chain; its full sequence is MSHIQRETSCSRPRLNSNMDADLYGYKWARDNVGQSGATIDRLYGKPDAPELFLKHGKGSVANDVTDEMVRLNWMTEFMPLPTIKHFIRTPDDAWLLTTAIPGKTAFQVLEEYPDSGENIVDALAVFLRRLHSIPVCNCPFNSDRVFRLVQAQSRMNNGLVDASDFDDERNGWPVEQVWKEMHKLLPFSPDSVVTHGDFSLDNLIFDEGKLIGCIDVGRVGIADRYQDLAILWNCLGEFSPSLQKRLFQKYGIDNPDMNKLQFTLMLDEFF.

The active-site Proton acceptor is the aspartate 198.

This sequence belongs to the aminoglycoside phosphotransferase family.

The catalysed reaction is kanamycin A + ATP = kanamycin 3'-phosphate + ADP + H(+). Functionally, resistance to kanamycin and structurally-related aminoglycosides, including amikacin. In Salmonella typhimurium, this protein is Aminoglycoside 3'-phosphotransferase.